A 220-amino-acid chain; its full sequence is Urease accessory protein UreF (220 aa).

The protein belongs to the UreF family. In terms of assembly, ureD, UreF and UreG form a complex that acts as a GTP-hydrolysis-dependent molecular chaperone, activating the urease apoprotein by helping to assemble the nickel containing metallocenter of UreC. The UreE protein probably delivers the nickel.

It localises to the cytoplasm. Functionally, required for maturation of urease via the functional incorporation of the urease nickel metallocenter. This Jannaschia sp. (strain CCS1) protein is Urease accessory protein UreF.